The primary structure comprises 334 residues: Adenosine deaminase (334 aa).

Zn(2+) contacts are provided by His16 and His18. 3 residues coordinate substrate: His18, Asp20, and Gly173. Zn(2+) is bound at residue His200. The Proton donor role is filled by Glu203. A Zn(2+)-binding site is contributed by Asp281.

This sequence belongs to the metallo-dependent hydrolases superfamily. Adenosine and AMP deaminases family. Adenosine deaminase subfamily. It depends on Zn(2+) as a cofactor.

The enzyme catalyses adenosine + H2O + H(+) = inosine + NH4(+). It carries out the reaction 2'-deoxyadenosine + H2O + H(+) = 2'-deoxyinosine + NH4(+). Its function is as follows. Catalyzes the hydrolytic deamination of adenosine and 2-deoxyadenosine. This Clostridium acetobutylicum (strain ATCC 824 / DSM 792 / JCM 1419 / IAM 19013 / LMG 5710 / NBRC 13948 / NRRL B-527 / VKM B-1787 / 2291 / W) protein is Adenosine deaminase.